A 479-amino-acid chain; its full sequence is Chromosomal replication initiator protein DnaA (479 aa).

The segment at 1-94 (MKGGTMVENA…QTLWRTERED (94 aa)) is domain I, interacts with DnaA modulators. Positions 94-142 (DIKGVELQVKRGLPEVSMGDAEDGEDGSGEGHELATQAAAPESRSDLAV) are domain II. Residues 106–137 (LPEVSMGDAEDGEDGSGEGHELATQAAAPESR) are disordered. The domain III, AAA+ region stretch occupies residues 143-359 (PLDPRFTFDT…GALNRLIAHA (217 aa)). 4 residues coordinate ATP: G188, G190, K191, and T192. The tract at residues 360 to 479 (DLVGRPVTLD…VELLRRMLEG (120 aa)) is domain IV, binds dsDNA.

It belongs to the DnaA family. Oligomerizes as a right-handed, spiral filament on DNA at oriC.

It localises to the cytoplasm. Functionally, plays an essential role in the initiation and regulation of chromosomal replication. ATP-DnaA binds to the origin of replication (oriC) to initiate formation of the DNA replication initiation complex once per cell cycle. Binds the DnaA box (a 9 base pair repeat at the origin) and separates the double-stranded (ds)DNA. Forms a right-handed helical filament on oriC DNA; dsDNA binds to the exterior of the filament while single-stranded (ss)DNA is stabiized in the filament's interior. The ATP-DnaA-oriC complex binds and stabilizes one strand of the AT-rich DNA unwinding element (DUE), permitting loading of DNA polymerase. After initiation quickly degrades to an ADP-DnaA complex that is not apt for DNA replication. Binds acidic phospholipids. This chain is Chromosomal replication initiator protein DnaA, found in Gluconobacter oxydans (strain 621H) (Gluconobacter suboxydans).